We begin with the raw amino-acid sequence, 199 residues long: Thioredoxin reductase-like selenoprotein T (199 aa).

Residues Met-1–Ser-24 form the signal peptide. Residues Cys-50–Sec-53 constitute a cross-link (cysteinyl-selenocysteine (Cys-Sec)). Residue Sec-53 is a non-standard amino acid, selenocysteine. A helical transmembrane segment spans residues Val-95–Gly-115.

It belongs to the SelWTH family. Selenoprotein T subfamily. In terms of processing, may contain a selenide-sulfide bond between Cys-50 and Sec-53. This bond is speculated to serve as redox-active pair.

Its subcellular location is the endoplasmic reticulum membrane. The enzyme catalyses [thioredoxin]-dithiol + NADP(+) = [thioredoxin]-disulfide + NADPH + H(+). In terms of biological role, selenoprotein with thioredoxin reductase-like oxidoreductase activity. The chain is Thioredoxin reductase-like selenoprotein T from Gallus gallus (Chicken).